The sequence spans 880 residues: Valine--tRNA ligase (880 aa).

The 'HIGH' region signature appears at Pro-51–His-61. The 'KMSKS' region motif lies at Lys-529 to Thr-533. ATP is bound at residue Lys-532. A coiled-coil region spans residues Met-815–Lys-854.

The protein belongs to the class-I aminoacyl-tRNA synthetase family. ValS type 1 subfamily. Monomer.

It localises to the cytoplasm. It catalyses the reaction tRNA(Val) + L-valine + ATP = L-valyl-tRNA(Val) + AMP + diphosphate. Catalyzes the attachment of valine to tRNA(Val). As ValRS can inadvertently accommodate and process structurally similar amino acids such as threonine, to avoid such errors, it has a 'posttransfer' editing activity that hydrolyzes mischarged Thr-tRNA(Val) in a tRNA-dependent manner. The protein is Valine--tRNA ligase of Dehalococcoides mccartyi (strain ATCC BAA-2266 / KCTC 15142 / 195) (Dehalococcoides ethenogenes (strain 195)).